A 350-amino-acid polypeptide reads, in one-letter code: Ion-translocating oxidoreductase complex subunit D (350 aa).

5 consecutive transmembrane segments (helical) span residues 19 to 39 (LMLL…WFFG), 41 to 61 (GTLI…ALVL), 67 to 87 (PVKP…IGLS), 88 to 108 (LPPL…IIIA), and 122 to 142 (PAMV…TSWL). FMN phosphoryl threonine is present on Thr186. The next 4 helical transmembrane spans lie at 213 to 233 (WGGI…LFLL), 242 to 262 (IPGA…LMTP), 264 to 284 (ATAT…AFFI), and 299 to 316 (LVYG…RRFG).

This sequence belongs to the NqrB/RnfD family. The complex is composed of six subunits: RnfA, RnfB, RnfC, RnfD, RnfE and RnfG. It depends on FMN as a cofactor.

It is found in the cell inner membrane. Functionally, part of a membrane-bound complex that couples electron transfer with translocation of ions across the membrane. The polypeptide is Ion-translocating oxidoreductase complex subunit D (Aeromonas hydrophila subsp. hydrophila (strain ATCC 7966 / DSM 30187 / BCRC 13018 / CCUG 14551 / JCM 1027 / KCTC 2358 / NCIMB 9240 / NCTC 8049)).